The primary structure comprises 381 residues: Queuine tRNA-ribosyltransferase (381 aa).

The active-site Proton acceptor is the Asp-92. Substrate is bound by residues 92–96 (DSGGF), Asp-146, Gln-190, and Gly-217. Residues 248–254 (GVGRPED) form an RNA binding region. Asp-267 acts as the Nucleophile in catalysis. Residues 272–276 (TRNAR) form an RNA binding; important for wobble base 34 recognition region. Zn(2+) contacts are provided by Cys-305, Cys-307, Cys-310, and His-337.

This sequence belongs to the queuine tRNA-ribosyltransferase family. As to quaternary structure, homodimer. Within each dimer, one monomer is responsible for RNA recognition and catalysis, while the other monomer binds to the replacement base PreQ1. The cofactor is Zn(2+).

The catalysed reaction is 7-aminomethyl-7-carbaguanine + guanosine(34) in tRNA = 7-aminomethyl-7-carbaguanosine(34) in tRNA + guanine. Its pathway is tRNA modification; tRNA-queuosine biosynthesis. In terms of biological role, catalyzes the base-exchange of a guanine (G) residue with the queuine precursor 7-aminomethyl-7-deazaguanine (PreQ1) at position 34 (anticodon wobble position) in tRNAs with GU(N) anticodons (tRNA-Asp, -Asn, -His and -Tyr). Catalysis occurs through a double-displacement mechanism. The nucleophile active site attacks the C1' of nucleotide 34 to detach the guanine base from the RNA, forming a covalent enzyme-RNA intermediate. The proton acceptor active site deprotonates the incoming PreQ1, allowing a nucleophilic attack on the C1' of the ribose to form the product. After dissociation, two additional enzymatic reactions on the tRNA convert PreQ1 to queuine (Q), resulting in the hypermodified nucleoside queuosine (7-(((4,5-cis-dihydroxy-2-cyclopenten-1-yl)amino)methyl)-7-deazaguanosine). The polypeptide is Queuine tRNA-ribosyltransferase (Xanthomonas campestris pv. campestris (strain B100)).